We begin with the raw amino-acid sequence, 371 residues long: Transaldolase (371 aa).

Lys-140 serves as the catalytic Schiff-base intermediate with substrate.

The protein belongs to the transaldolase family. Type 2 subfamily.

The protein localises to the cytoplasm. The catalysed reaction is D-sedoheptulose 7-phosphate + D-glyceraldehyde 3-phosphate = D-erythrose 4-phosphate + beta-D-fructose 6-phosphate. It participates in carbohydrate degradation; pentose phosphate pathway; D-glyceraldehyde 3-phosphate and beta-D-fructose 6-phosphate from D-ribose 5-phosphate and D-xylulose 5-phosphate (non-oxidative stage): step 2/3. In terms of biological role, transaldolase is important for the balance of metabolites in the pentose-phosphate pathway. The protein is Transaldolase of Arthrobacter sp. (strain FB24).